Consider the following 417-residue polypeptide: Tyrosine--tRNA ligase (417 aa).

L-tyrosine is bound at residue Y34. Residues 39–48 carry the 'HIGH' region motif; it reads PTAKSIHIGN. The L-tyrosine site is built by Y165 and Q169. Residues 227-231 carry the 'KMSKS' region motif; sequence KFGKS. An ATP-binding site is contributed by K230. An S4 RNA-binding domain is found at 349-416; sequence TDVVELLVKD…GKKKYFLAKV (68 aa).

It belongs to the class-I aminoacyl-tRNA synthetase family. TyrS type 1 subfamily. As to quaternary structure, homodimer.

Its subcellular location is the cytoplasm. The enzyme catalyses tRNA(Tyr) + L-tyrosine + ATP = L-tyrosyl-tRNA(Tyr) + AMP + diphosphate + H(+). Its function is as follows. Catalyzes the attachment of tyrosine to tRNA(Tyr) in a two-step reaction: tyrosine is first activated by ATP to form Tyr-AMP and then transferred to the acceptor end of tRNA(Tyr). This is Tyrosine--tRNA ligase from Oenococcus oeni (strain ATCC BAA-331 / PSU-1).